The primary structure comprises 108 residues: MESEGRRVVHIGLPELTEEQIIEVGELAQRVVIKHVFDALNRSDVKDIEVTTRINRGETLDLELEVYLEVPVFVKVDVERLIDEAVEKAYAAVEKKLREIANEGQDKA.

It belongs to the UPF0440 family.

This is an uncharacterized protein from Thermococcus kodakarensis (strain ATCC BAA-918 / JCM 12380 / KOD1) (Pyrococcus kodakaraensis (strain KOD1)).